The following is a 575-amino-acid chain: uncharacterized protein (575 aa).

It is found in the cytoplasm. The protein resides in the cytoskeleton. It localises to the microtubule organizing center. Its subcellular location is the spindle pole body. This is an uncharacterized protein from Schizosaccharomyces pombe (strain 972 / ATCC 24843) (Fission yeast).